A 370-amino-acid chain; its full sequence is Dual-specificity RNA methyltransferase RlmN (370 aa).

E93 serves as the catalytic Proton acceptor. The Radical SAM core domain maps to 99 to 337 (EEGRGTLCVS…VTTVRKTRGD (239 aa)). A disulfide bond links C106 and C343. [4Fe-4S] cluster is bound by residues C113, C117, and C120. Residues 167–168 (GE), S199, 221–223 (SLH), and N300 each bind S-adenosyl-L-methionine. Residue C343 is the S-methylcysteine intermediate of the active site.

Belongs to the radical SAM superfamily. RlmN family. [4Fe-4S] cluster is required as a cofactor.

The protein localises to the cytoplasm. The enzyme catalyses adenosine(2503) in 23S rRNA + 2 reduced [2Fe-2S]-[ferredoxin] + 2 S-adenosyl-L-methionine = 2-methyladenosine(2503) in 23S rRNA + 5'-deoxyadenosine + L-methionine + 2 oxidized [2Fe-2S]-[ferredoxin] + S-adenosyl-L-homocysteine. It catalyses the reaction adenosine(37) in tRNA + 2 reduced [2Fe-2S]-[ferredoxin] + 2 S-adenosyl-L-methionine = 2-methyladenosine(37) in tRNA + 5'-deoxyadenosine + L-methionine + 2 oxidized [2Fe-2S]-[ferredoxin] + S-adenosyl-L-homocysteine. Functionally, specifically methylates position 2 of adenine 2503 in 23S rRNA and position 2 of adenine 37 in tRNAs. m2A2503 modification seems to play a crucial role in the proofreading step occurring at the peptidyl transferase center and thus would serve to optimize ribosomal fidelity. The chain is Dual-specificity RNA methyltransferase RlmN from Francisella philomiragia subsp. philomiragia (strain ATCC 25017 / CCUG 19701 / FSC 153 / O#319-036).